The sequence spans 635 residues: Early transcription factor 70 kDa subunit (635 aa).

Positions 32–185 (RSILDENNSV…SNIISIMSDE (154 aa)) constitute a Helicase ATP-binding domain. 45–52 (HIMGSGKT) contacts ATP. The DEXH box signature appears at 135-138 (DEAH).

This sequence belongs to the helicase family. VETF subfamily. In terms of assembly, heterodimer of a 70 kDa and a 82 kDa subunit. Part of the early transcription complex composed of ETF, RAP94, and the DNA-directed RNA polymerase.

The protein localises to the virion. Functionally, acts with RNA polymerase to initiate transcription from early gene promoters. Is recruited by the RPO-associated protein of 94 kDa (RAP94) to form the early transcription complex, which also contains the core RNA polymerase. ETF heterodimer binds to early gene promoters. The protein is Early transcription factor 70 kDa subunit (VETFS) of Homo sapiens (Human).